We begin with the raw amino-acid sequence, 136 residues long: Histone H3.1 (136 aa).

The tract at residues 1-43 is disordered; the sequence is MARTKQTARKSTGGKAPRKQLATKAARKSAPATGGVKKPHRYR. Asymmetric dimethylarginine; by PRMT6; alternate is present on arginine 3. A Citrulline; alternate modification is found at arginine 3. At threonine 4 the chain carries Phosphothreonine; by HASPIN and VRK1. Lysine 5 carries the post-translational modification Allysine; alternate. Lysine 5 carries the post-translational modification N6,N6,N6-trimethyllysine; alternate. An N6,N6-dimethyllysine; alternate modification is found at lysine 5. Lysine 5 carries the N6-(2-hydroxyisobutyryl)lysine; alternate modification. Position 5 is an N6-(beta-hydroxybutyryl)lysine; alternate (lysine 5). At lysine 5 the chain carries N6-acetyllysine; alternate. The residue at position 5 (lysine 5) is an N6-crotonyllysine; alternate. At lysine 5 the chain carries N6-methyllysine; alternate. The residue at position 6 (glutamine 6) is a 5-glutamyl dopamine; alternate. At glutamine 6 the chain carries 5-glutamyl serotonin; alternate. Position 7 is a phosphothreonine; by PKC (threonine 7). A Citrulline; alternate modification is found at arginine 9. The residue at position 9 (arginine 9) is a Symmetric dimethylarginine; by PRMT5; alternate. Position 10 is an N6,N6,N6-trimethyllysine; alternate (lysine 10). Residue lysine 10 is modified to N6,N6-dimethyllysine; alternate. Residue lysine 10 is modified to N6-(2-hydroxyisobutyryl)lysine; alternate. Position 10 is an N6-(beta-hydroxybutyryl)lysine; alternate (lysine 10). N6-acetyllysine; alternate is present on lysine 10. Position 10 is an N6-crotonyllysine; alternate (lysine 10). Lysine 10 bears the N6-methyllysine; alternate mark. The residue at position 10 (lysine 10) is an N6-butyryllysine; alternate. Lysine 10 is subject to N6-lactoyllysine; alternate. ADP-ribosylserine; alternate is present on serine 11. Serine 11 is modified (phosphoserine; alternate; by AURKB, AURKC, RPS6KA3, RPS6KA4 and RPS6KA5). Threonine 12 bears the Phosphothreonine; by PKC and CHEK1 mark. Lysine 15 carries the N6-(2-hydroxyisobutyryl)lysine; alternate modification. Lysine 15 is subject to N6-(beta-hydroxybutyryl)lysine; alternate. N6-acetyllysine; alternate is present on lysine 15. N6-lactoyllysine; alternate is present on lysine 15. At lysine 15 the chain carries N6-glutaryllysine; alternate. At lysine 15 the chain carries N6-succinyllysine; alternate. The residue at position 18 (arginine 18) is a Citrulline; alternate. Arginine 18 carries the asymmetric dimethylarginine; by CARM1; alternate modification. Residues lysine 19 and lysine 24 each carry the N6-(2-hydroxyisobutyryl)lysine; alternate modification. Residues lysine 19 and lysine 24 each carry the N6-(beta-hydroxybutyryl)lysine; alternate modification. N6-acetyllysine; alternate is present on residues lysine 19 and lysine 24. N6-crotonyllysine; alternate occurs at positions 19 and 24. Lysine 19 and lysine 24 each carry N6-methyllysine; alternate. 2 positions are modified to N6-butyryllysine; alternate: lysine 19 and lysine 24. Residues lysine 19 and lysine 24 each carry the N6-lactoyllysine; alternate modification. 2 positions are modified to N6-glutaryllysine; alternate: lysine 19 and lysine 24. Residue lysine 19 is the site of N6-decanoyllysine attachment. Arginine 27 is subject to Citrulline. An N6,N6,N6-trimethyllysine; alternate modification is found at lysine 28. At lysine 28 the chain carries N6,N6-dimethyllysine; alternate. Residue lysine 28 is modified to N6-(2-hydroxyisobutyryl)lysine; alternate. N6-(beta-hydroxybutyryl)lysine; alternate is present on lysine 28. Position 28 is an N6-acetyllysine; alternate (lysine 28). At lysine 28 the chain carries N6-crotonyllysine; alternate. Lysine 28 is subject to N6-methyllysine; alternate. At lysine 28 the chain carries N6-lactoyllysine; alternate. Lysine 28 is subject to N6-glutaryllysine; alternate. An ADP-ribosylserine; alternate modification is found at serine 29. Residue serine 29 is modified to Phosphoserine; alternate; by AURKB, AURKC and RPS6KA5. Lysine 37 is subject to N6,N6,N6-trimethyllysine; alternate. Lysine 37 carries the post-translational modification N6,N6-dimethyllysine; alternate. Residue lysine 37 is modified to N6-(2-hydroxyisobutyryl)lysine; alternate. Lysine 37 carries the post-translational modification N6-acetyllysine; alternate. The residue at position 37 (lysine 37) is an N6-methyllysine; alternate. The residue at position 38 (lysine 38) is an N6-methyllysine. Tyrosine 42 bears the Phosphotyrosine mark. Lysine 57 bears the N6,N6,N6-trimethyllysine; alternate mark. Lysine 57 carries the N6-(2-hydroxyisobutyryl)lysine; alternate modification. At lysine 57 the chain carries N6-(beta-hydroxybutyryl)lysine; alternate. N6-acetyllysine; alternate is present on lysine 57. Lysine 57 bears the N6-crotonyllysine; alternate mark. Lysine 57 carries the N6-lactoyllysine; alternate modification. N6-glutaryllysine; alternate is present on lysine 57. Position 57 is an N6-succinyllysine; alternate (lysine 57). Lysine 57 is modified (N6-methyllysine; by EHMT2; alternate). The residue at position 58 (serine 58) is a Phosphoserine. N6-(2-hydroxyisobutyryl)lysine; alternate is present on residues lysine 65 and lysine 80. 2 positions are modified to N6-methyllysine; alternate: lysine 65 and lysine 80. Position 80 is an N6,N6,N6-trimethyllysine; alternate (lysine 80). Lysine 80 is subject to N6,N6-dimethyllysine; alternate. N6-(beta-hydroxybutyryl)lysine; alternate is present on lysine 80. Position 80 is an N6-acetyllysine; alternate (lysine 80). An N6-lactoyllysine; alternate modification is found at lysine 80. Lysine 80 is modified (N6-glutaryllysine; alternate). Lysine 80 bears the N6-succinyllysine; alternate mark. Threonine 81 is subject to Phosphothreonine. Serine 87 bears the Phosphoserine mark. At threonine 108 the chain carries Phosphothreonine. 2 positions are modified to N6-acetyllysine; alternate: lysine 116 and lysine 123. N6-glutaryllysine; alternate occurs at positions 116 and 123. Residue lysine 123 is modified to N6-(2-hydroxyisobutyryl)lysine; alternate. The residue at position 123 (lysine 123) is an N6-(beta-hydroxybutyryl)lysine; alternate. Residue lysine 123 is modified to N6-methyllysine; alternate. Lysine 123 is subject to N6-succinyllysine; alternate.

Belongs to the histone H3 family. As to quaternary structure, the nucleosome is a histone octamer containing two molecules each of H2A, H2B, H3 and H4 assembled in one H3-H4 heterotetramer and two H2A-H2B heterodimers. The octamer wraps approximately 147 bp of DNA. Interacts with TONSL; CHAF1A; CHAF1B; MCM2 and DNAJC9. Interacts with NASP; NASP is a histone chaperone that stabilizes and maintains a soluble pool of Histone H3-H4 dimers. Acetylation is generally linked to gene activation. Acetylation on Lys-10 (H3K9ac) impairs methylation at Arg-9 (H3R8me2s). Acetylation on Lys-19 (H3K18ac) and Lys-24 (H3K24ac) favors methylation at Arg-18 (H3R17me). Acetylation at Lys-123 (H3K122ac) by EP300/p300 plays a central role in chromatin structure: localizes at the surface of the histone octamer and stimulates transcription, possibly by promoting nucleosome instability. Post-translationally, citrullination at Arg-9 (H3R8ci) and/or Arg-18 (H3R17ci) by PADI4 impairs methylation and represses transcription. In terms of processing, asymmetric dimethylation at Arg-18 (H3R17me2a) by CARM1 is linked to gene activation. Symmetric dimethylation at Arg-9 (H3R8me2s) by PRMT5 is linked to gene repression. Asymmetric dimethylation at Arg-3 (H3R2me2a) by PRMT6 is linked to gene repression and is mutually exclusive with H3 Lys-5 methylation (H3K4me2 and H3K4me3). H3R2me2a is present at the 3' of genes regardless of their transcription state and is enriched on inactive promoters, while it is absent on active promoters. Methylation at Lys-5 (H3K4me), Lys-37 (H3K36me) and Lys-80 (H3K79me) are linked to gene activation. Methylation at Lys-5 (H3K4me) facilitates subsequent acetylation of H3 and H4. Methylation at Lys-80 (H3K79me) is associated with DNA double-strand break (DSB) responses and is a specific target for TP53BP1. Methylation at Lys-10 (H3K9me) and Lys-28 (H3K27me) are linked to gene repression. Methylation at Lys-10 (H3K9me) is a specific target for HP1 proteins (CBX1, CBX3 and CBX5) and prevents subsequent phosphorylation at Ser-11 (H3S10ph) and acetylation of H3 and H4. Methylation at Lys-5 (H3K4me) and Lys-80 (H3K79me) require preliminary monoubiquitination of H2B at 'Lys-120'. Methylation at Lys-10 (H3K9me) and Lys-28 (H3K27me) are enriched in inactive X chromosome chromatin. Monomethylation at Lys-57 (H3K56me1) by EHMT2/G9A in G1 phase promotes interaction with PCNA and is required for DNA replication. Post-translationally, phosphorylated at Thr-4 (H3T3ph) by VRK1. Phosphorylated at Thr-4 (H3T3ph) by HASPIN during prophase and dephosphorylated during anaphase. Phosphorylation at Ser-11 (H3S10ph) by AURKB is crucial for chromosome condensation and cell-cycle progression during mitosis and meiosis. In addition phosphorylation at Ser-11 (H3S10ph) by RPS6KA4 and RPS6KA5 is important during interphase because it enables the transcription of genes following external stimulation, like mitogens, stress, growth factors or UV irradiation and result in the activation of genes, such as c-fos and c-jun. Phosphorylation at Ser-11 (H3S10ph), which is linked to gene activation, prevents methylation at Lys-10 (H3K9me) but facilitates acetylation of H3 and H4. Phosphorylation at Ser-11 (H3S10ph) by AURKB mediates the dissociation of HP1 proteins (CBX1, CBX3 and CBX5) from heterochromatin. Phosphorylation at Ser-11 (H3S10ph) is also an essential regulatory mechanism for neoplastic cell transformation. Phosphorylated at Ser-29 (H3S28ph) by MAP3K20 isoform 1, RPS6KA5 or AURKB during mitosis or upon ultraviolet B irradiation. Phosphorylation at Thr-7 (H3T6ph) by PRKCB is a specific tag for epigenetic transcriptional activation that prevents demethylation of Lys-5 (H3K4me) by LSD1/KDM1A. At centromeres, specifically phosphorylated at Thr-12 (H3T11ph) from prophase to early anaphase, by DAPK3 and PKN1. Phosphorylation at Thr-12 (H3T11ph) by PKN1 or isoform M2 of PKM (PKM2) is a specific tag for epigenetic transcriptional activation that promotes demethylation of Lys-10 (H3K9me) by KDM4C/JMJD2C. Phosphorylation at Thr-12 (H3T11ph) by chromatin-associated CHEK1 regulates the transcription of cell cycle regulatory genes by modulating acetylation of Lys-10 (H3K9ac). Phosphorylation at Tyr-42 (H3Y41ph) by JAK2 promotes exclusion of CBX5 (HP1 alpha) from chromatin. In terms of processing, monoubiquitinated by RAG1 in lymphoid cells, monoubiquitination is required for V(D)J recombination. Ubiquitinated by the CUL4-DDB-RBX1 complex in response to ultraviolet irradiation. This may weaken the interaction between histones and DNA and facilitate DNA accessibility to repair proteins. Lysine deamination at Lys-5 (H3K4all) to form allysine is mediated by LOXL2. Allysine formation by LOXL2 only takes place on H3K4me3 and results in gene repression. Post-translationally, crotonylation (Kcr) is specifically present in male germ cells and marks testis-specific genes in post-meiotic cells, including X-linked genes that escape sex chromosome inactivation in haploid cells. Crotonylation marks active promoters and enhancers and confers resistance to transcriptional repressors. It is also associated with post-meiotically activated genes on autosomes. In terms of processing, butyrylation of histones marks active promoters and competes with histone acetylation. It is present during late spermatogenesis. Succinylation at Lys-80 (H3K79succ) by KAT2A takes place with a maximum frequency around the transcription start sites of genes. It gives a specific tag for epigenetic transcription activation. Desuccinylation at Lys-123 (H3K122succ) by SIRT7 in response to DNA damage promotes chromatin condensation and double-strand breaks (DSBs) repair. Post-translationally, serine ADP-ribosylation by PARP1 or PARP2 constitutes the primary form of ADP-ribosylation of proteins in response to DNA damage. Serine ADP-ribosylation at Ser-11 (H3S10ADPr) promotes recruitment of CHD1L. H3S10ADPr is mutually exclusive with phosphorylation at Ser-11 (H3S10ph) and impairs acetylation at Lys-10 (H3K9ac). In terms of processing, serotonylated by TGM2 at Gln-6 (H3Q5ser) during serotonergic neuron differentiation. H3Q5ser is associated with trimethylation of Lys-5 (H3K4me3) and enhances general transcription factor IID (TFIID) complex-binding to H3K4me3, thereby facilitating transcription. Dopaminylated by TGM2 at Gln-6 (H3Q5dop) in ventral tegmental area (VTA) neurons. H3Q5dop mediates neurotransmission-independent role of nuclear dopamine by regulating relapse-related transcriptional plasticity in the reward system. Post-translationally, lactylated in macrophages by EP300/P300 by using lactoyl-CoA directly derived from endogenous or exogenous lactate, leading to stimulates gene transcription.

It localises to the nucleus. It is found in the chromosome. Its function is as follows. Core component of nucleosome. Nucleosomes wrap and compact DNA into chromatin, limiting DNA accessibility to the cellular machineries which require DNA as a template. Histones thereby play a central role in transcription regulation, DNA repair, DNA replication and chromosomal stability. DNA accessibility is regulated via a complex set of post-translational modifications of histones, also called histone code, and nucleosome remodeling. The polypeptide is Histone H3.1 (Homo sapiens (Human)).